Here is a 491-residue protein sequence, read N- to C-terminus: Nuatigenin 3-beta-glucosyltransferase (491 aa).

H20 acts as the Proton acceptor in catalysis. Position 20 (H20) interacts with an anthocyanidin. The active-site Charge relay is D125. UDP-alpha-D-glucose contacts are provided by A352, Q354, H369, W372, N373, S374, and E377. A392 provides a ligand contact to an anthocyanidin. UDP-alpha-D-glucose contacts are provided by E393 and Q394.

It belongs to the UDP-glycosyltransferase family. As to expression, expressed in roots, stems and leaves.

The enzyme catalyses nuatigenin + UDP-alpha-D-glucose = nuatigenin 3-beta-D-glucopyranoside + UDP + H(+). The catalysed reaction is diosgenin + UDP-alpha-D-glucose = diosgenin 3-O-beta-D-glucoside + UDP + H(+). It carries out the reaction tigogenin + UDP-alpha-D-glucose = tigogenin 3-O-beta-D-glucopyranoside + UDP + H(+). It catalyses the reaction solasodine + UDP-alpha-D-glucose = solasodine 3-beta-D-glucoside + UDP + H(+). The enzyme catalyses solanidine + UDP-alpha-D-glucose = solanidine 3-O-beta-D-glucopyranoside + UDP + H(+). The catalysed reaction is tomatidine + UDP-alpha-D-glucose = tomatidine 3-O-beta-D-glucopyranoside + UDP + H(+). Glucosyltransferase involved in steroid saponin biosynthesis. Catalyzes the 3-O-glucosylation of steroidal sapogenins, such as diosgenin, nuatigenin and tigogenin. Can glucosylate steroidal alkaloids, such as solanidine, solasodine and tomatidine. The protein is Nuatigenin 3-beta-glucosyltransferase of Solanum aculeatissimum (Dutch eggplant).